We begin with the raw amino-acid sequence, 62 residues long: Conotoxin Im11.9 (62 aa).

Positions 1–22 (MFRVTSVLLVIVLLNLVVLTNA) are cleaved as a signal peptide. 4 cysteine pairs are disulfide-bonded: Cys23-Cys33, Cys27-Cys38, Cys32-Cys41, and Cys37-Cys46. Positions 23–49 (CHMDCSKMTCCSGICCFYCGRPMCPGT) are excised as a propeptide.

This sequence belongs to the conotoxin I2 superfamily. As to expression, expressed by the venom duct.

It is found in the secreted. Its function is as follows. Probable neurotoxin. In Conus imperialis (Imperial cone), this protein is Conotoxin Im11.9.